A 361-amino-acid chain; its full sequence is Phosphoserine aminotransferase (361 aa).

Residue Arg-43 coordinates L-glutamate. Residues 77-78, Trp-103, Thr-153, Asp-173, and Gln-196 contribute to the pyridoxal 5'-phosphate site; that span reads AS. Residue Lys-197 is modified to N6-(pyridoxal phosphate)lysine. 238–239 is a binding site for pyridoxal 5'-phosphate; it reads NT.

It belongs to the class-V pyridoxal-phosphate-dependent aminotransferase family. SerC subfamily. Homodimer. The cofactor is pyridoxal 5'-phosphate.

The protein localises to the cytoplasm. It carries out the reaction O-phospho-L-serine + 2-oxoglutarate = 3-phosphooxypyruvate + L-glutamate. It catalyses the reaction 4-(phosphooxy)-L-threonine + 2-oxoglutarate = (R)-3-hydroxy-2-oxo-4-phosphooxybutanoate + L-glutamate. The protein operates within amino-acid biosynthesis; L-serine biosynthesis; L-serine from 3-phospho-D-glycerate: step 2/3. It functions in the pathway cofactor biosynthesis; pyridoxine 5'-phosphate biosynthesis; pyridoxine 5'-phosphate from D-erythrose 4-phosphate: step 3/5. Catalyzes the reversible conversion of 3-phosphohydroxypyruvate to phosphoserine and of 3-hydroxy-2-oxo-4-phosphonooxybutanoate to phosphohydroxythreonine. The sequence is that of Phosphoserine aminotransferase from Pseudomonas syringae pv. syringae (strain B728a).